Here is a 684-residue protein sequence, read N- to C-terminus: Threonine--tRNA ligase (684 aa).

Residues 1–66 form the TGS domain; the sequence is MSTAASPAPA…DADVEVVPVP (66 aa). The tract at residues 261–567 is catalytic; sequence DHRKLGVELD…LTEHYAGAFP (307 aa). 3 residues coordinate Zn(2+): Cys366, His417, and His544.

This sequence belongs to the class-II aminoacyl-tRNA synthetase family. Homodimer. It depends on Zn(2+) as a cofactor.

It localises to the cytoplasm. The catalysed reaction is tRNA(Thr) + L-threonine + ATP = L-threonyl-tRNA(Thr) + AMP + diphosphate + H(+). Catalyzes the attachment of threonine to tRNA(Thr) in a two-step reaction: L-threonine is first activated by ATP to form Thr-AMP and then transferred to the acceptor end of tRNA(Thr). Also edits incorrectly charged L-seryl-tRNA(Thr). The protein is Threonine--tRNA ligase of Mycobacterium sp. (strain KMS).